Here is a 426-residue protein sequence, read N- to C-terminus: Serine--tRNA ligase (426 aa).

233-235 (TAE) provides a ligand contact to L-serine. 264–266 (RSE) serves as a coordination point for ATP. Residue glutamate 287 participates in L-serine binding. 351-354 (EISS) serves as a coordination point for ATP. Serine 387 contacts L-serine.

Belongs to the class-II aminoacyl-tRNA synthetase family. Type-1 seryl-tRNA synthetase subfamily. In terms of assembly, homodimer. The tRNA molecule binds across the dimer.

The protein localises to the cytoplasm. It carries out the reaction tRNA(Ser) + L-serine + ATP = L-seryl-tRNA(Ser) + AMP + diphosphate + H(+). It catalyses the reaction tRNA(Sec) + L-serine + ATP = L-seryl-tRNA(Sec) + AMP + diphosphate + H(+). It participates in aminoacyl-tRNA biosynthesis; selenocysteinyl-tRNA(Sec) biosynthesis; L-seryl-tRNA(Sec) from L-serine and tRNA(Sec): step 1/1. Its function is as follows. Catalyzes the attachment of serine to tRNA(Ser). Is also able to aminoacylate tRNA(Sec) with serine, to form the misacylated tRNA L-seryl-tRNA(Sec), which will be further converted into selenocysteinyl-tRNA(Sec). The protein is Serine--tRNA ligase of Pseudomonas syringae pv. syringae (strain B728a).